The primary structure comprises 118 residues: V-type proton ATPase subunit G 1 (118 aa).

Position 2 is an N-acetylalanine (Ala2).

This sequence belongs to the V-ATPase G subunit family. In terms of assembly, V-ATPase is a heteromultimeric enzyme made up of two complexes: the ATP-hydrolytic V1 complex and the proton translocation V0 complex. The V1 complex consists of three catalytic AB heterodimers that form a heterohexamer, three peripheral stalks each consisting of EG heterodimers, one central rotor including subunits D and F, and the regulatory subunits C and H. The proton translocation complex V0 consists of the proton transport subunit a, a ring of proteolipid subunits c9c'', rotary subunit d, subunits e and f, and the accessory subunits ATP6AP1/Ac45 and ATP6AP2/PRR. As to expression, kidney; localizes to early distal nephron, encompassing thick ascending limbs and distal convoluted tubules (at protein level). Ubiquitous.

It is found in the apical cell membrane. Functionally, subunit of the V1 complex of vacuolar(H+)-ATPase (V-ATPase), a multisubunit enzyme composed of a peripheral complex (V1) that hydrolyzes ATP and a membrane integral complex (V0) that translocates protons. V-ATPase is responsible for acidifying and maintaining the pH of intracellular compartments and in some cell types, is targeted to the plasma membrane, where it is responsible for acidifying the extracellular environment. In aerobic conditions, involved in intracellular iron homeostasis, thus triggering the activity of Fe(2+) prolyl hydroxylase (PHD) enzymes, and leading to HIF1A hydroxylation and subsequent proteasomal degradation. This Mus musculus (Mouse) protein is V-type proton ATPase subunit G 1 (Atp6v1g1).